The chain runs to 188 residues: Probable nicotinate-nucleotide adenylyltransferase (188 aa).

It belongs to the NadD family.

It catalyses the reaction nicotinate beta-D-ribonucleotide + ATP + H(+) = deamido-NAD(+) + diphosphate. It functions in the pathway cofactor biosynthesis; NAD(+) biosynthesis; deamido-NAD(+) from nicotinate D-ribonucleotide: step 1/1. Catalyzes the reversible adenylation of nicotinate mononucleotide (NaMN) to nicotinic acid adenine dinucleotide (NaAD). This Listeria monocytogenes serovar 1/2a (strain ATCC BAA-679 / EGD-e) protein is Probable nicotinate-nucleotide adenylyltransferase.